The chain runs to 758 residues: 5-methyltetrahydropteroyltriglutamate--homocysteine methyltransferase (758 aa).

5-methyltetrahydropteroyltri-L-glutamate contacts are provided by residues 17–20 and Lys-113; that span reads RELK. L-homocysteine is bound by residues 433 to 435 and Glu-486; that span reads IGS. L-methionine-binding positions include 433–435 and Glu-486; that span reads IGS. Residues 517 to 518 and Trp-563 contribute to the 5-methyltetrahydropteroyltri-L-glutamate site; that span reads RC. Asp-601 contacts L-homocysteine. An L-methionine-binding site is contributed by Asp-601. Residue Glu-607 participates in 5-methyltetrahydropteroyltri-L-glutamate binding. Positions 643, 645, and 667 each coordinate Zn(2+). Residue His-696 is the Proton donor of the active site. Residue Cys-728 coordinates Zn(2+).

The protein belongs to the vitamin-B12 independent methionine synthase family. It depends on Zn(2+) as a cofactor.

The enzyme catalyses 5-methyltetrahydropteroyltri-L-glutamate + L-homocysteine = tetrahydropteroyltri-L-glutamate + L-methionine. It functions in the pathway amino-acid biosynthesis; L-methionine biosynthesis via de novo pathway; L-methionine from L-homocysteine (MetE route): step 1/1. Catalyzes the transfer of a methyl group from 5-methyltetrahydrofolate to homocysteine resulting in methionine formation. This Nitrosomonas europaea (strain ATCC 19718 / CIP 103999 / KCTC 2705 / NBRC 14298) protein is 5-methyltetrahydropteroyltriglutamate--homocysteine methyltransferase.